Here is a 184-residue protein sequence, read N- to C-terminus: MSSTGTTLSASEGDKGFRNGAAPAKSKSHSTIALLRLLAFAATLSAFVTMITNKQKITIGPFTRWSKWHYSDAFMWFVVANCIAFIYLLFAAILGLISHSPMLVKHLVILDLIVSYMLFSAASAATAVAYIGKNGISQPGWTAICGVFERYCHHVAGALVACFLGWLFLTIAVFLGMRRSPAAV.

Residues 1–30 (MSSTGTTLSASEGDKGFRNGAAPAKSKSHS) are Cytoplasmic-facing. A helical transmembrane segment spans residues 31-51 (TIALLRLLAFAATLSAFVTMI). Residues 52-76 (TNKQKITIGPFTRWSKWHYSDAFMW) are Extracellular-facing. A helical membrane pass occupies residues 77–97 (FVVANCIAFIYLLFAAILGLI). Residues 98–111 (SHSPMLVKHLVILD) lie on the Cytoplasmic side of the membrane. The chain crosses the membrane as a helical span at residues 112 to 132 (LIVSYMLFSAASAATAVAYIG). Residues 133 to 154 (KNGISQPGWTAICGVFERYCHH) are Extracellular-facing. The helical transmembrane segment at 155 to 175 (VAGALVACFLGWLFLTIAVFL) threads the bilayer. Residues 176–184 (GMRRSPAAV) lie on the Cytoplasmic side of the membrane.

It belongs to the Casparian strip membrane proteins (CASP) family. As to quaternary structure, homodimer and heterodimers.

Its subcellular location is the cell membrane. In Marchantia polymorpha (Common liverwort), this protein is CASP-like protein 1U1.